The chain runs to 128 residues: Flagellar assembly factor FliW 1 (128 aa).

This sequence belongs to the FliW family. In terms of assembly, interacts with translational regulator CsrA and flagellin(s).

It is found in the cytoplasm. Acts as an anti-CsrA protein, binds CsrA and prevents it from repressing translation of its target genes, one of which is flagellin. Binds to flagellin and participates in the assembly of the flagellum. This is Flagellar assembly factor FliW 1 from Wolinella succinogenes (strain ATCC 29543 / DSM 1740 / CCUG 13145 / JCM 31913 / LMG 7466 / NCTC 11488 / FDC 602W) (Vibrio succinogenes).